The primary structure comprises 239 residues: mRNA turnover protein 4 homolog (239 aa).

Residues 216–239 (QQMGDDLPESAPESEGESEEEDDS) form a disordered region. Positions 221 to 239 (DLPESAPESEGESEEEDDS) are enriched in acidic residues. 3 positions are modified to phosphoserine: Ser225, Ser229, and Ser233.

Belongs to the universal ribosomal protein uL10 family. Associates with the pre-60S ribosomal particle. Interacts with MINAS-60 (product of an alternative open reading frame of RBM10).

The protein resides in the nucleus. It localises to the nucleolus. The protein localises to the cytoplasm. Its function is as follows. Component of the ribosome assembly machinery. Nuclear paralog of the ribosomal protein P0, it binds pre-60S subunits at an early stage of assembly in the nucleolus, and is replaced by P0 in cytoplasmic pre-60S subunits and mature 80S ribosomes. This chain is mRNA turnover protein 4 homolog (MRTO4), found in Bos taurus (Bovine).